The primary structure comprises 272 residues: 2-dehydro-3-deoxyphosphooctonate aldolase (272 aa).

This sequence belongs to the KdsA family.

It localises to the cytoplasm. It carries out the reaction D-arabinose 5-phosphate + phosphoenolpyruvate + H2O = 3-deoxy-alpha-D-manno-2-octulosonate-8-phosphate + phosphate. The protein operates within carbohydrate biosynthesis; 3-deoxy-D-manno-octulosonate biosynthesis; 3-deoxy-D-manno-octulosonate from D-ribulose 5-phosphate: step 2/3. It participates in bacterial outer membrane biogenesis; lipopolysaccharide biosynthesis. This chain is 2-dehydro-3-deoxyphosphooctonate aldolase, found in Geobacter metallireducens (strain ATCC 53774 / DSM 7210 / GS-15).